A 169-amino-acid polypeptide reads, in one-letter code: Peptide deformylase (169 aa).

Positions 94 and 136 each coordinate Fe cation. Residue Glu-137 is part of the active site. Position 140 (His-140) interacts with Fe cation.

Belongs to the polypeptide deformylase family. It depends on Fe(2+) as a cofactor.

It catalyses the reaction N-terminal N-formyl-L-methionyl-[peptide] + H2O = N-terminal L-methionyl-[peptide] + formate. Its function is as follows. Removes the formyl group from the N-terminal Met of newly synthesized proteins. Requires at least a dipeptide for an efficient rate of reaction. N-terminal L-methionine is a prerequisite for activity but the enzyme has broad specificity at other positions. This is Peptide deformylase from Phenylobacterium zucineum (strain HLK1).